The following is a 1464-amino-acid chain: MMSFVQSGTWFLLTLLHPTLILAQQSNVDELGCSHLGQSYESRDVWKPEPCQICVCDSGSVLCDDIICDEEPLDCPNPEIPFGECCAICPQPSTPAPVLPDGHGPQGPKGDPGPPGIPGRNGDPGLPGQPGLPGPPGSPGICESCPTGGQNYSPQFDSYDVKSGVGGMGGYPGPAGPPGPPGPPGSSGHPGSPGSPGYQGPPGEPGQAGPAGPPGPPGALGPAGPAGKDGESGRPGRPGERGLPGPPGIKGPAGMPGFPGMKGHRGFDGRNGEKGETGAPGLKGENGLPGDNGAPGPMGPRGAPGERGRPGLPGAAGARGNDGARGSDGQPGPPGPPGTAGFPGSPGAKGEVGPAGSPGSNGSPGQRGEPGPQGHAGAQGPPGPPGNNGSPGGKGEMGPAGIPGAPGLIGARGPPGPAGTNGIPGTRGPSGEPGKNGAKGEPGARGERGEAGSPGIPGPKGEDGKDGSPGEPGANGLPGAAGERGPSGFRGPAGPNGIPGEKGPPGERGGPGPAGPRGVAGEPGRDGTPGGPGIRGMPGSPGGPGNDGKPGPPGSQGESGRPGPPGPSGPRGQPGVMGFPGPKGNDGAPGKNGERGGPGGPGLPGPAGKNGETGPQGPPGPTGPAGDKGDSGPPGPQGLQGIPGTGGPPGENGKPGEPGPKGEVGAPGAPGGKGDSGAPGERGPPGTAGIPGARGGAGPPGPEGGKGPAGPPGPPGASGSPGLQGMPGERGGPGSPGPKGEKGEPGGAGADGVPGKDGPRGPAGPIGPPGPAGQPGDKGEGGSPGLPGIAGPRGGPGERGEHGPPGPAGFPGAPGQNGEPGAKGERGAPGEKGEGGPPGPAGPTGSSGPAGPPGPQGVKGERGSPGGPGTAGFPGGRGLPGPPGNNGNPGPPGPSGAPGKDGPPGPAGNSGSPGNPGIAGPKGDAGQPGEKGPPGAQGPPGSPGPLGIAGLTGARGLAGPPGMPGPRGSPGPQGIKGESGKPGASGHNGERGPPGPQGLPGQPGTAGEPGRDGNPGSDGQPGRDGSPGGKGDRGENGSPGAPGAPGHPGPPGPVGPSGKSGDRGETGPAGPSGAPGPAGARGAPGPQGPRGDKGETGERGSNGIKGHRGFPGNPGPPGSPGAAGHQGAIGSPGPAGPRGPVGPHGPPGKDGTSGHPGPIGPPGPRGNRGERGSEGSPGHPGQPGPPGPPGAPGPCCGGGAAAIAGVGGEKSGGFSPYYGDDPMDFKINTEEIMSSLKSVNGQIESLISPDGSRKNPARNCRDLKFCHPELKSGEYWVDPNQGCKMDAIKVFCNMETGETCINASPMTVPRKHWWTDSGAEKKHVWFGESMNGGFQFSYGPPDLPEDVVDVQLAFLRLLSSRASQNITYHCKNSIAYMDQASGNVKKSLKLMGSNEGEFKAEGNSKFTYTVLEDGCTKHTGEWSKTVFEYQTRKAMRLPIIDIAPYDIGGPDQEFGVDIGPVCFL.

The signal sequence occupies residues 1–23 (MMSFVQSGTWFLLTLLHPTLILA). The propeptide at 24–154 (QQSNVDELGC…CPTGGQNYSP (131 aa)) is N-terminal propeptide. In terms of domain architecture, VWFC spans 31–90 (LGCSHLGQSYESRDVWKPEPCQICVCDSGSVLCDDIICDEEPLDCPNPEIPFGECCAICP). A disordered region spans residues 97 to 1195 (PVLPDGHGPQ…PGPPGAPGPC (1099 aa)). A compositionally biased stretch (low complexity) spans 100–109 (PDGHGPQGPK). The span at 147–156 (TGGQNYSPQF) shows a compositional bias: polar residues. The interval 155 to 169 (QFDSYDVKSGVGGMG) is nonhelical region (N-terminal). A compositionally biased stretch (gly residues) spans 164–173 (GVGGMGGYPG). Residues 170–1195 (GYPGPAGPPG…PGPPGAPGPC (1026 aa)) form a triple-helical region region. Over residues 174–184 (PAGPPGPPGPP) the composition is skewed to pro residues. Low complexity predominate over residues 186–198 (SSGHPGSPGSPGY). Residues 228 to 240 (KDGESGRPGRPGE) show a composition bias toward basic and acidic residues. Lysine 262 carries the post-translational modification 5-hydroxylysine; alternate. Lysine 262 is a glycosylation site (O-linked (Gal...) hydroxylysine; alternate). Residues 265–276 (RGFDGRNGEKGE) are compositionally biased toward basic and acidic residues. At lysine 283 the chain carries 5-hydroxylysine. Low complexity-rich tracts occupy residues 310-321 (PGLPGAAGARGN) and 354-379 (PAGS…AGAQ). A compositionally biased stretch (gly residues) spans 389–398 (GSPGGKGEMG). Low complexity predominate over residues 399–412 (PAGIPGAPGLIGAR). A compositionally biased stretch (gly residues) spans 527 to 548 (GTPGGPGIRGMPGSPGGPGNDG). A compositionally biased stretch (low complexity) spans 606–615 (PAGKNGETGP). Composition is skewed to gly residues over residues 641–650 (GIPGTGGPPG) and 668–677 (GAPGGKGDSG). Over residues 678–691 (APGERGPPGTAGIP) the composition is skewed to low complexity. Gly residues predominate over residues 692–708 (GARGGAGPPGPEGGKGP). Residues 717–727 (ASGSPGLQGMP) are compositionally biased toward low complexity. Residues 822 to 834 (AKGERGAPGEKGE) are compositionally biased toward basic and acidic residues. Lysine 859 carries the post-translational modification 5-hydroxylysine. Positions 863-879 (GSPGGPGTAGFPGGRGL) are enriched in gly residues. The span at 889–906 (PGPPGPSGAPGKDGPPGP) shows a compositional bias: pro residues. 2 stretches are compositionally biased toward low complexity: residues 907 to 934 (AGNS…KGPP) and 945 to 960 (PLGI…LAGP). Lysine 976 carries the post-translational modification 5-hydroxylysine. Residues 1045-1054 (PGHPGPPGPV) show a composition bias toward pro residues. Positions 1068–1084 (PAGPSGAPGPAGARGAP) are enriched in low complexity. 5-hydroxylysine is present on residues lysine 1093 and lysine 1105. Positions 1120-1132 (PGAAGHQGAIGSP) are enriched in low complexity. A compositionally biased stretch (pro residues) spans 1180 to 1192 (PGQPGPPGPPGAP). Positions 1220–1464 (DDPMDFKINT…GVDIGPVCFL (245 aa)) are cleaved as a propeptide — C-terminal propeptide. Positions 1230–1464 (EEIMSSLKSV…GVDIGPVCFL (235 aa)) constitute a Fibrillar collagen NC1 domain. 3 disulfide bridges follow: cysteine 1260–cysteine 1292, cysteine 1300–cysteine 1462, and cysteine 1370–cysteine 1415. Ca(2+) is bound by residues aspartate 1278, asparagine 1280, glutamine 1281, cysteine 1283, and aspartate 1286.

It belongs to the fibrillar collagen family. As to quaternary structure, trimers of identical alpha 1(III) chains. The chains are linked to each other by interchain disulfide bonds. Trimers are also cross-linked via hydroxylysines. Interacts with ADGRG1. In terms of processing, proline residues at the third position of the tripeptide repeating unit (G-X-Y) are hydroxylated in some or all of the chains. O-linked glycan consists of a Glc-Gal disaccharide bound to the oxygen atom of a post-translationally added hydroxyl group. Expressed in embryonic brain, specifically in the meninges, pial basement membrane and blood vessels (at protein level).

The protein resides in the secreted. It is found in the extracellular space. Its subcellular location is the extracellular matrix. In terms of biological role, collagen type III occurs in most soft connective tissues along with type I collagen. Involved in regulation of cortical development. Is the major ligand of ADGRG1 in the developing brain and binding to ADGRG1 inhibits neuronal migration and activates the RhoA pathway by coupling ADGRG1 to GNA13 and possibly GNA12. In Mus musculus (Mouse), this protein is Collagen alpha-1(III) chain (Col3a1).